The chain runs to 157 residues: Crossover junction endodeoxyribonuclease RuvC (157 aa).

Catalysis depends on residues aspartate 9, glutamate 70, and aspartate 142. Positions 9, 70, and 142 each coordinate Mg(2+).

Belongs to the RuvC family. Homodimer which binds Holliday junction (HJ) DNA. The HJ becomes 2-fold symmetrical on binding to RuvC with unstacked arms; it has a different conformation from HJ DNA in complex with RuvA. In the full resolvosome a probable DNA-RuvA(4)-RuvB(12)-RuvC(2) complex forms which resolves the HJ. Mg(2+) is required as a cofactor.

The protein localises to the cytoplasm. It catalyses the reaction Endonucleolytic cleavage at a junction such as a reciprocal single-stranded crossover between two homologous DNA duplexes (Holliday junction).. In terms of biological role, the RuvA-RuvB-RuvC complex processes Holliday junction (HJ) DNA during genetic recombination and DNA repair. Endonuclease that resolves HJ intermediates. Cleaves cruciform DNA by making single-stranded nicks across the HJ at symmetrical positions within the homologous arms, yielding a 5'-phosphate and a 3'-hydroxyl group; requires a central core of homology in the junction. The consensus cleavage sequence is 5'-(A/T)TT(C/G)-3'. Cleavage occurs on the 3'-side of the TT dinucleotide at the point of strand exchange. HJ branch migration catalyzed by RuvA-RuvB allows RuvC to scan DNA until it finds its consensus sequence, where it cleaves and resolves the cruciform DNA. This chain is Crossover junction endodeoxyribonuclease RuvC, found in Cyanothece sp. (strain PCC 7425 / ATCC 29141).